A 203-amino-acid polypeptide reads, in one-letter code: Excretory canal abnormal exc-13 (203 aa).

A signal peptide spans 1–20 (MIGFLKFALIGTVLLGVANG). N32, N84, and N188 each carry an N-linked (GlcNAc...) asparagine glycan.

Belongs to the UPF0376 family.

It is found in the secreted. This chain is Excretory canal abnormal exc-13, found in Caenorhabditis elegans.